We begin with the raw amino-acid sequence, 444 residues long: Acyl-CoA (8-3)-desaturase (444 aa).

Methionine 1 bears the N-acetylmethionine mark. Residues 1 to 121 (MAPDPVAAKT…FRELRATVEQ (121 aa)) are Cytoplasmic-facing. The Cytochrome b5 heme-binding domain maps to 17–94 (PRYFTWDEVA…MNSLLIGELS (78 aa)). A helical membrane pass occupies residues 122 to 142 (MGLMKANHVFFLLYLLHILLL). Residues 143-146 (DGAA) lie on the Lumenal side of the membrane. The helical transmembrane segment at 147–167 (WLTLWIFGTSFLPFLLCAVLL) threads the bilayer. At 168 to 267 (TAAQIQAGWL…PYNHQHKYFF (100 aa)) the chain is on the cytoplasmic side. A Histidine box-1 motif is present at residues 179–183 (HDLGH). The short motif at 216–220 (HFQHH) is the Histidine box-2 element. A helical transmembrane segment spans residues 268 to 288 (LIGPPALVPFFFQWYVFYFVI). Over 289–305 (QRKKWVDLAWMITFYIR) the chain is Lumenal. Residues 306–326 (LLLTYVPLLGLKAFLGLYFIV) traverse the membrane as a helical segment. Residues 327–444 (RFLESNWFVW…QLWLDAYLHQ (118 aa)) lie on the Cytoplasmic side of the membrane. A Histidine box-3 motif is present at residues 382–386 (QIEHH).

This sequence belongs to the fatty acid desaturase type 1 family. As to expression, widely expressed. Expressed in brain, liver and thymus (at protein level). Isoform 1 seems to be more abundant than isoform 2. Expression of isoform 2 is very low in spleen and not detectable in skeletal muscle.

The protein localises to the endoplasmic reticulum membrane. It localises to the mitochondrion. The enzyme catalyses (8Z,11Z,14Z)-eicosatrienoyl-CoA + 2 Fe(II)-[cytochrome b5] + O2 + 2 H(+) = (5Z,8Z,11Z,14Z)-eicosatetraenoyl-CoA + 2 Fe(III)-[cytochrome b5] + 2 H2O. The catalysed reaction is (8Z,11Z,14Z,17Z)-eicosatetraenoyl-CoA + 2 Fe(II)-[cytochrome b5] + O2 + 2 H(+) = (5Z,8Z,11Z,14Z,17Z)-eicosapentaenoyl-CoA + 2 Fe(III)-[cytochrome b5] + 2 H2O. It carries out the reaction (11E)-octadecenoyl-CoA + 2 Fe(II)-[cytochrome b5] + O2 + 2 H(+) = (5Z,11E)-octadecadienoyl-CoA + 2 Fe(III)-[cytochrome b5] + 2 H2O. The protein operates within lipid metabolism; polyunsaturated fatty acid biosynthesis. Its function is as follows. Acts as a front-end fatty acyl-coenzyme A (CoA) desaturase that introduces a cis double bond at carbon 5 located between a preexisting double bond and the carboxyl end of the fatty acyl chain. Involved in biosynthesis of highly unsaturated fatty acids (HUFA) from the essential polyunsaturated fatty acids (PUFA) linoleic acid (LA) (18:2n-6) and alpha-linolenic acid (ALA) (18:3n-3) precursors. Specifically, desaturates dihomo-gamma-linoleoate (DGLA) (20:3n-6) and eicosatetraenoate (ETA) (20:4n-3) to generate arachidonate (AA) (20:4n-6) and eicosapentaenoate (EPA) (20:5n-3), respectively. As a rate limiting enzyme for DGLA (20:3n-6) and AA (20:4n-6)-derived eicosanoid biosynthesis, controls the metabolism of inflammatory lipids like prostaglandin E2, critical for efficient acute inflammatory response and maintenance of epithelium homeostasis. Contributes to membrane phospholipid biosynthesis by providing AA (20:4n-6) as a major acyl chain esterified into phospholipids. In particular, regulates phosphatidylinositol-4,5-bisphosphate levels, modulating inflammatory cytokine production in T-cells. Also desaturates (11E)-octadecenoate (trans-vaccenoate)(18:1n-9), a metabolite in the biohydrogenation pathway of LA (18:2n-6). In terms of biological role, does not exhibit any catalytic activity toward 20:3n-6, but it may enhance FADS2 activity. This Papio anubis (Olive baboon) protein is Acyl-CoA (8-3)-desaturase.